The primary structure comprises 239 residues: AEETSFVFSKFKPLEPNLILQGDALVTVAGVLQLTNVDSNGVPEPSSLGRATYSAPINIWDSATGLVASFATSFRFTIYAPNIATIADGLAFFLAPVASAPDSGGGFLGLFDSAVGDTTYQTVAVEFDTYENTVFTDPPYTHIGFDVNSISSIKTVKWSLANGEAAKVLITYNSAVKLLVASLVYPSSKTSFILADIVDLSSVLPEWVRVGFSAATGASKGYIETHDVFSWSFASKLAG.

Residues Asp88 and Gly106 each coordinate D-glucose. Glu126 and Asp128 together coordinate Mn(2+). Asp128, Asn132, and Asp137 together coordinate Ca(2+). Mn(2+) contacts are provided by Asp137 and His142. Positions 217 and 218 each coordinate D-glucose.

Belongs to the leguminous lectin family. In terms of assembly, tetramer consisting of heterodimers of alpha and beta chains.

Functionally, galactose-binding lectin. Agglutinates human erythrocytes, and requires Ca(2+) and Mn(2+) ions for full agglutinating activity. Has antifungal activity against Fusarium sp., A.niger and A.flavus. The polypeptide is Seed lectin beta chain (Spatholobus parviflorus (Butea parviflora)).